We begin with the raw amino-acid sequence, 296 residues long: Large ribosomal subunit protein uL15m (296 aa).

Residues Met1–Arg20 constitute a mitochondrion transit peptide. The interval Asn25–Arg59 is disordered.

It belongs to the universal ribosomal protein uL15 family. In terms of assembly, component of the mitochondrial ribosome large subunit (39S) which comprises a 16S rRNA and about 50 distinct proteins.

The protein resides in the mitochondrion. This chain is Large ribosomal subunit protein uL15m (mrpl15), found in Danio rerio (Zebrafish).